The sequence spans 2185 residues: Genome polyprotein (2185 aa).

Glycine 2 is lipidated: N-myristoyl glycine; by host. Over 2–1495 (GAQVSTQKTG…HVNRAFICLQ (1494 aa)) the chain is Cytoplasmic. The segment at 566 to 582 (FFQGPPGEVVERAIARV) is amphipathic alpha-helix. Residues histidine 872 and aspartate 890 each act as for protease 2A activity in the active site. Positions 907 and 909 each coordinate Zn(2+). Cysteine 961 functions as the For protease 2A activity in the catalytic mechanism. Residues cysteine 967 and histidine 969 each contribute to the Zn(2+) site. Residues 1101 to 1173 (NSGWLKKFTE…EQSAPSQSDQ (73 aa)) are membrane-binding. Positions 1101–1239 (NSGWLKKFTE…SPGAGKSVAT (139 aa)) are oligomerization. The segment at 1122–1126 (AIKIQ) is RNA-binding. The 157-residue stretch at 1205 to 1361 (EKKMSNYIQF…SMYSQNGKIN (157 aa)) folds into the SF3 helicase domain. Positions 1369, 1381, and 1386 each coordinate Zn(2+). The C4-type; degenerate zinc-finger motif lies at 1369–1386 (CDEECCPVNFKKCCPLVC). The interval 1413–1420 (EYNHRHSV) is RNA-binding. Residues 1424-1429 (LEALFQ) form an oligomerization region. The stretch at 1496-1511 (ALTTFVSVAGIIYIIY) is an intramembrane region. At 1512–2185 (KLFAGFQGAY…TLRRKWLDSF (674 aa)) the chain is on the cytoplasmic side. O-(5'-phospho-RNA)-tyrosine is present on tyrosine 1521. The Peptidase C3 domain maps to 1541-1719 (GPAFEFAVAM…FSAALLRHYF (179 aa)). Residues histidine 1580, glutamate 1611, and cysteine 1687 each act as for protease 3C activity in the active site. The 117-residue stretch at 1950–2066 (GHLIAFDYSG…SYPWPIDASL (117 aa)) folds into the RdRp catalytic domain. Positions 1956 and 2052 each coordinate Mg(2+).

It belongs to the picornaviruses polyprotein family. In terms of assembly, interacts with capsid protein VP1 and capsid protein VP3 to form heterotrimeric protomers. As to quaternary structure, interacts with capsid protein VP0, and capsid protein VP3 to form heterotrimeric protomers. Five protomers subsequently associate to form pentamers which serve as building blocks for the capsid. Interacts with capsid protein VP2, capsid protein VP3 and capsid protein VP4 following cleavage of capsid protein VP0. Interacts with capsid protein VP1 and capsid protein VP3 in the mature capsid. In terms of assembly, interacts with capsid protein VP0 and capsid protein VP1 to form heterotrimeric protomers. Five protomers subsequently associate to form pentamers which serve as building blocks for the capsid. Interacts with capsid protein VP4 in the mature capsid. Interacts with protein 2C; this interaction may be important for virion morphogenesis. As to quaternary structure, interacts with capsid protein VP1 and capsid protein VP3. Homodimer. In terms of assembly, homohexamer; forms a hexameric ring structure with 6-fold symmetry characteristic of AAA+ ATPases. Interacts (via N-terminus) with host RTN3 (via reticulon domain); this interaction is important for viral replication. Interacts with capsid protein VP3; this interaction may be important for virion morphogenesis. As to quaternary structure, interacts with protein 3CD. Homodimer. Interacts with host GBF1. Interacts (via GOLD domain) with host ACBD3 (via GOLD domain); this interaction allows the formation of a viral protein 3A/ACBD3 heterotetramer with a 2:2 stoichiometry, which will stimulate the recruitment of host PI4KB in order to synthesize PI4P at the viral RNA replication sites. In terms of assembly, interacts with RNA-directed RNA polymerase. As to quaternary structure, interacts with protein 3AB and with RNA-directed RNA polymerase. Interacts with Viral protein genome-linked and with protein 3CD. Mg(2+) is required as a cofactor. Specific enzymatic cleavages in vivo by the viral proteases yield processing intermediates and the mature proteins. Post-translationally, myristoylation is required for the formation of pentamers during virus assembly. Further assembly of 12 pentamers and a molecule of genomic RNA generates the provirion. In terms of processing, during virion maturation, immature virions are rendered infectious following cleavage of VP0 into VP4 and VP2. This maturation seems to be an autocatalytic event triggered by the presence of RNA in the capsid and it is followed by a conformational change infectious virion. Myristoylation is required during RNA encapsidation and formation of the mature virus particle. Post-translationally, VPg is uridylylated by the polymerase into VPg-pUpU. This acts as a nucleotide-peptide primer for the genomic RNA replication.

Its subcellular location is the virion. It localises to the host cytoplasm. It is found in the host cytoplasmic vesicle membrane. The protein localises to the host nucleus. It catalyses the reaction a ribonucleoside 5'-triphosphate + H2O = a ribonucleoside 5'-diphosphate + phosphate + H(+). The enzyme catalyses Selective cleavage of Tyr-|-Gly bond in the picornavirus polyprotein.. The catalysed reaction is RNA(n) + a ribonucleoside 5'-triphosphate = RNA(n+1) + diphosphate. It carries out the reaction Selective cleavage of Gln-|-Gly bond in the poliovirus polyprotein. In other picornavirus reactions Glu may be substituted for Gln, and Ser or Thr for Gly.. With respect to regulation, replication or transcription is subject to high level of random mutations by the nucleotide analog ribavirin. Forms an icosahedral capsid of pseudo T=3 symmetry with capsid proteins VP2 and VP3. The capsid is 300 Angstroms in diameter, composed of 60 copies of each capsid protein and enclosing the viral positive strand RNA genome. Capsid protein VP1 mainly forms the vertices of the capsid. Capsid protein VP1 interacts with host cell receptor to provide virion attachment to target host cells. This attachment induces virion internalization. Tyrosine kinases are probably involved in the entry process. After binding to its receptor, the capsid undergoes conformational changes. Capsid protein VP1 N-terminus (that contains an amphipathic alpha-helix) and capsid protein VP4 are externalized. Together, they shape a pore in the host membrane through which viral genome is translocated to host cell cytoplasm. Functionally, forms an icosahedral capsid of pseudo T=3 symmetry with capsid proteins VP2 and VP3. The capsid is 300 Angstroms in diameter, composed of 60 copies of each capsid protein and enclosing the viral positive strand RNA genome. In terms of biological role, lies on the inner surface of the capsid shell. After binding to the host receptor, the capsid undergoes conformational changes. Capsid protein VP4 is released, Capsid protein VP1 N-terminus is externalized, and together, they shape a pore in the host membrane through which the viral genome is translocated into the host cell cytoplasm. Its function is as follows. Component of immature procapsids, which is cleaved into capsid proteins VP4 and VP2 after maturation. Allows the capsid to remain inactive before the maturation step. Cysteine protease that cleaves viral polyprotein and specific host proteins. It is responsible for the autocatalytic cleavage between the P1 and P2 regions, which is the first cleavage occurring in the polyprotein. Also cleaves the host translation initiation factor EIF4G1, in order to shut down the capped cellular mRNA translation. Inhibits the host nucleus-cytoplasm protein and RNA trafficking by cleaving host members of the nuclear pores. Counteracts stress granule formation probably by antagonizing its assembly or promoting its dissassembly. Functionally, plays an essential role in the virus replication cycle by acting as a viroporin. Creates a pore in the host endoplasmic reticulum and as a consequence releases Ca2+ in the cytoplasm of infected cell. In turn, high levels of cytoplasmic calcium may trigger membrane trafficking and transport of viral ER-associated proteins to viroplasms, sites of viral genome replication. In terms of biological role, induces and associates with structural rearrangements of intracellular membranes. Displays RNA-binding, nucleotide binding and NTPase activities. May play a role in virion morphogenesis and viral RNA encapsidation by interacting with the capsid protein VP3. Its function is as follows. Localizes the viral replication complex to the surface of membranous vesicles. Together with protein 3CD binds the Cis-Active RNA Element (CRE) which is involved in RNA synthesis initiation. Acts as a cofactor to stimulate the activity of 3D polymerase, maybe through a nucleid acid chaperone activity. Localizes the viral replication complex to the surface of membranous vesicles. It inhibits host cell endoplasmic reticulum-to-Golgi apparatus transport and causes the disassembly of the Golgi complex, possibly through GBF1 interaction. This would result in depletion of MHC, trail receptors and IFN receptors at the host cell surface. Plays an essential role in viral RNA replication by recruiting ACBD3 and PI4KB at the viral replication sites, thereby allowing the formation of the rearranged membranous structures where viral replication takes place. Functionally, acts as a primer for viral RNA replication and remains covalently bound to viral genomic RNA. VPg is uridylylated prior to priming replication into VPg-pUpU. The oriI viral genomic sequence may act as a template for this. The VPg-pUpU is then used as primer on the genomic RNA poly(A) by the RNA-dependent RNA polymerase to replicate the viral genome. During genome replication, the VPg-RNA linkage is removed by the host TDP2, thereby accelerating replication. During the late stage of the replication cycle, host TDP2 is excluded from sites of viral RNA synthesis and encapsidation, allowing for the generation of progeny virions. In terms of biological role, involved in the viral replication complex and viral polypeptide maturation. It exhibits protease activity with a specificity and catalytic efficiency that is different from protease 3C. Protein 3CD lacks polymerase activity. Protein 3CD binds to the 5'UTR of the viral genome. Its function is as follows. Major viral protease that mediates proteolytic processing of the polyprotein. Cleaves host EIF5B, contributing to host translation shutoff. Also cleaves host PABPC1, contributing to host translation shutoff. Cleaves host NLRP1, triggers host N-glycine-mediated degradation of the autoinhibitory NLRP1 N-terminal fragment. Replicates the viral genomic RNA on the surface of intracellular membranes. May form linear arrays of subunits that propagate along a strong head-to-tail interaction called interface-I. Covalently attaches UMP to a tyrosine of VPg, which is used to prime RNA synthesis. The positive stranded RNA genome is first replicated at virus induced membranous vesicles, creating a dsRNA genomic replication form. This dsRNA is then used as template to synthesize positive stranded RNA genomes. ss(+)RNA genomes are either translated, replicated or encapsidated. The chain is Genome polyprotein from Swine vesicular disease virus (strain H/3 '76) (SVDV).